The following is a 447-amino-acid chain: MGTRSHYLDLGFLLLLFLPAECLGAEGRLAHKLFRDLFANYTSALRPVADTDQTLNVTLEVTLSQIIDMDERNQVLTLYLWIRQEWTDAYLHWDPKAYGDLDAIRIPSRLVWRPDIVLYNKADTQPPASASTNVVVRHDGAVRWDAPAITRSSCRVDVSAFPFDAQRCGLTFGSWTHGGHQLDVRPRGTSASLADFVENVEWRVLGMPARRRVLTYGCCSEPYPDVTFTLLLRRRAAAYVCNLLLPCVFISLLAPLAFHLPADSGEKVSLGVTVLLALTVFQLILAESMPPAESVPLIGKYYMATMTMVTFSTALTILIMNLHYCGPNAHPVPAWARVLLLGHLAKGLCVRERGEPCGQSKPLESAPSLQPPPASPAGPCHEPRCLCHQEALLHHIASIASTFRSHRAAQRRHEDWKRLARVMDRFFLGIFFCMALVMSLIVLVQAL.

Positions 1–24 (MGTRSHYLDLGFLLLLFLPAECLG) are cleaved as a signal peptide. Residues 25–237 (AEGRLAHKLF…FTLLLRRRAA (213 aa)) are Extracellular-facing. N-linked (GlcNAc...) asparagine glycosylation is found at Asn40 and Asn56. 2 disulfides stabilise this stretch: Cys154–Cys168 and Cys218–Cys219. 3 consecutive transmembrane segments (helical) span residues 238–258 (AYVC…PLAF), 268–288 (VSLG…LAES), and 302–322 (YMAT…IMNL). The Cytoplasmic portion of the chain corresponds to 323 to 425 (HYCGPNAHPV…WKRLARVMDR (103 aa)). A helical transmembrane segment spans residues 426–446 (FFLGIFFCMALVMSLIVLVQA).

It belongs to the ligand-gated ion channel (TC 1.A.9) family. Acetylcholine receptor (TC 1.A.9.1) subfamily. Alpha-10/CHRNA10 sub-subfamily. In terms of assembly, forms homo- or heterooligomeric channels in conjunction with CHRNA10. The native outer hair cell receptor may be composed of CHRNA9:CHRNA10 heterooligomers. Found in the stoichiometric form (CHRNA9)2:(CHRNA10)3. As to expression, expressed in the outer hair cells of the cochlea and the neurons of dorsal root ganglia.

Its subcellular location is the synaptic cell membrane. The protein resides in the cell membrane. The catalysed reaction is Ca(2+)(in) = Ca(2+)(out). It catalyses the reaction Mg(2+)(in) = Mg(2+)(out). It carries out the reaction K(+)(in) = K(+)(out). The enzyme catalyses Na(+)(in) = Na(+)(out). Activated by a myriad of ligands such as acetylcholine. AChR activity is inhibited by the antagonist alpha-conotoxins RgIA and GeXXA, small disulfide-constrained peptides from cone snails. Functionally, component of neuronal acetylcholine receptors (nAChRs) that function as pentameric, ligand-gated cation channels with high calcium permeability among other activities. nAChRs are excitatory neurotrasnmitter receptors formed by a collection of nAChR subunits known to mediate synaptic transmission in the nervous system and the neuromuscular junction. Each nAchR subunit confers differential attributes to channel properties, including activation, deactivation and desensitization kinetics, pH sensitivity, cation permeability, and binding to allosteric modulators. Forms heteropentamers with CHRNA9. Expressed in the inner ear, in sympathetic neurons and in other non-neuronal cells, such as skin keratinocytes and lymphocytes. nAChR formed by CHRNA9:CHRNA10 mediate central nervous system control of auditory and vestibular sensory processing. The channel is permeable to a range of divalent cations including calcium, the influx of which may activate a potassium current which hyperpolarizes the cell membrane. In the ear, mediates synaptic transmission between efferent olivocochlear fibers and hair cells of the cochlea, this may lead to a reduction in basilar membrane motion, altering the activity of auditory nerve fibers and reducing the range of dynamic hearing. This may protect against acoustic trauma. May also regulate keratinocyte adhesion. This Rattus norvegicus (Rat) protein is Neuronal acetylcholine receptor subunit alpha-10 (Chrna10).